The chain runs to 204 residues: Phosphoribosyl-dephospho-CoA transferase (204 aa).

Active-site residues include Asp129 and Asp131.

It belongs to the MdcG family.

It carries out the reaction apo-[malonate decarboxylase ACP] + 2'-(5''-triphospho-alpha-D-ribosyl)-3'-dephospho-CoA = holo-[malonate decarboxylase ACP] + diphosphate. In terms of biological role, transfers 2'-(5-triphosphoribosyl)-3'-dephosphocoenzyme-A to the apo-[acyl-carrier-protein] of the malonate decarboxylase to yield holo-[acyl-carrier-protein]. In Pseudomonas putida (Arthrobacter siderocapsulatus), this protein is Phosphoribosyl-dephospho-CoA transferase.